The chain runs to 155 residues: 6,7-dimethyl-8-ribityllumazine synthase (155 aa).

5-amino-6-(D-ribitylamino)uracil-binding positions include Phe22, 56 to 58 (AFE), and 80 to 82 (AVI). 85 to 86 (ST) serves as a coordination point for (2S)-2-hydroxy-3-oxobutyl phosphate. The active-site Proton donor is His88. Phe113 is a 5-amino-6-(D-ribitylamino)uracil binding site. Arg127 contributes to the (2S)-2-hydroxy-3-oxobutyl phosphate binding site.

It belongs to the DMRL synthase family.

It carries out the reaction (2S)-2-hydroxy-3-oxobutyl phosphate + 5-amino-6-(D-ribitylamino)uracil = 6,7-dimethyl-8-(1-D-ribityl)lumazine + phosphate + 2 H2O + H(+). Its pathway is cofactor biosynthesis; riboflavin biosynthesis; riboflavin from 2-hydroxy-3-oxobutyl phosphate and 5-amino-6-(D-ribitylamino)uracil: step 1/2. Catalyzes the formation of 6,7-dimethyl-8-ribityllumazine by condensation of 5-amino-6-(D-ribitylamino)uracil with 3,4-dihydroxy-2-butanone 4-phosphate. This is the penultimate step in the biosynthesis of riboflavin. The sequence is that of 6,7-dimethyl-8-ribityllumazine synthase from Bifidobacterium longum subsp. infantis (strain ATCC 15697 / DSM 20088 / JCM 1222 / NCTC 11817 / S12).